A 119-amino-acid chain; its full sequence is Large ribosomal subunit protein uL22 (119 aa).

It belongs to the universal ribosomal protein uL22 family. Part of the 50S ribosomal subunit.

This protein binds specifically to 23S rRNA; its binding is stimulated by other ribosomal proteins, e.g. L4, L17, and L20. It is important during the early stages of 50S assembly. It makes multiple contacts with different domains of the 23S rRNA in the assembled 50S subunit and ribosome. Its function is as follows. The globular domain of the protein is located near the polypeptide exit tunnel on the outside of the subunit, while an extended beta-hairpin is found that lines the wall of the exit tunnel in the center of the 70S ribosome. In Bifidobacterium longum (strain DJO10A), this protein is Large ribosomal subunit protein uL22.